We begin with the raw amino-acid sequence, 631 residues long: Phosphomethylpyrimidine synthase (631 aa).

Substrate-binding positions include Asn-239, Met-268, Tyr-297, His-333, 353-355, 394-397, and Glu-433; these read SRG and DGLR. A Zn(2+)-binding site is contributed by His-437. A substrate-binding site is contributed by Tyr-460. His-501 contributes to the Zn(2+) binding site. Cys-581, Cys-584, and Cys-589 together coordinate [4Fe-4S] cluster.

It belongs to the ThiC family. In terms of assembly, homodimer. The cofactor is [4Fe-4S] cluster.

It carries out the reaction 5-amino-1-(5-phospho-beta-D-ribosyl)imidazole + S-adenosyl-L-methionine = 4-amino-2-methyl-5-(phosphooxymethyl)pyrimidine + CO + 5'-deoxyadenosine + formate + L-methionine + 3 H(+). Its pathway is cofactor biosynthesis; thiamine diphosphate biosynthesis. In terms of biological role, catalyzes the synthesis of the hydroxymethylpyrimidine phosphate (HMP-P) moiety of thiamine from aminoimidazole ribotide (AIR) in a radical S-adenosyl-L-methionine (SAM)-dependent reaction. The chain is Phosphomethylpyrimidine synthase from Klebsiella pneumoniae (strain 342).